The following is a 179-amino-acid chain: Large ribosomal subunit protein uL5 (179 aa).

The protein belongs to the universal ribosomal protein uL5 family. In terms of assembly, part of the 50S ribosomal subunit; part of the 5S rRNA/L5/L18/L25 subcomplex. Contacts the 5S rRNA and the P site tRNA. Forms a bridge to the 30S subunit in the 70S ribosome.

Its function is as follows. This is one of the proteins that bind and probably mediate the attachment of the 5S RNA into the large ribosomal subunit, where it forms part of the central protuberance. In the 70S ribosome it contacts protein S13 of the 30S subunit (bridge B1b), connecting the 2 subunits; this bridge is implicated in subunit movement. Contacts the P site tRNA; the 5S rRNA and some of its associated proteins might help stabilize positioning of ribosome-bound tRNAs. The sequence is that of Large ribosomal subunit protein uL5 from Verminephrobacter eiseniae (strain EF01-2).